The following is a 446-amino-acid chain: Putative ZDHHC-type palmitoyltransferase 2 (446 aa).

Disordered stretches follow at residues 1–33 and 56–83; these read MNLY…INNN and QIIN…HNNP. N-linked (GlcNAc...) asparagine glycans are attached at residues asparagine 5, asparagine 8, asparagine 14, and asparagine 21. A compositionally biased stretch (low complexity) spans 56 to 81; the sequence is QIINKNNNNNHNRNNNNNNNNNNNHN. N-linked (GlcNAc...) asparagine glycosylation is found at asparagine 141, asparagine 145, asparagine 159, and asparagine 165. A run of 5 helical transmembrane segments spans residues 178–198, 210–230, 305–325, 349–369, and 410–430; these read IVIF…IFPW, IHSF…YLCS, YFVL…TLLI, LFLL…IMAL, and IISN…LPTI. The 51-residue stretch at 261–311 folds into the DHHC domain; that stretch reads KWCNKCNHQKPERAHHCRYCNRCVLRMDHHCQWLQNCIGLFNQKYFVLFLF.

It belongs to the DHHC palmitoyltransferase family.

It localises to the membrane. The catalysed reaction is L-cysteinyl-[protein] + hexadecanoyl-CoA = S-hexadecanoyl-L-cysteinyl-[protein] + CoA. This is Putative ZDHHC-type palmitoyltransferase 2 from Dictyostelium discoideum (Social amoeba).